A 205-amino-acid chain; its full sequence is Ribonuclease HII (205 aa).

One can recognise an RNase H type-2 domain in the interval 16–205 (VSEVGIDEVG…KSFLNQSDLI (190 aa)). 3 residues coordinate a divalent metal cation: Asp22, Glu23, and Asp118.

Belongs to the RNase HII family. The cofactor is Mn(2+). Requires Mg(2+) as cofactor.

The protein localises to the cytoplasm. The enzyme catalyses Endonucleolytic cleavage to 5'-phosphomonoester.. Its function is as follows. Endonuclease that specifically degrades the RNA of RNA-DNA hybrids. This is Ribonuclease HII from Prochlorococcus marinus (strain MIT 9312).